Reading from the N-terminus, the 243-residue chain is tRNA pseudouridine synthase A (243 aa).

The Nucleophile role is filled by Asp53. Tyr111 is a binding site for substrate.

This sequence belongs to the tRNA pseudouridine synthase TruA family. As to quaternary structure, homodimer.

It catalyses the reaction uridine(38/39/40) in tRNA = pseudouridine(38/39/40) in tRNA. Formation of pseudouridine at positions 38, 39 and 40 in the anticodon stem and loop of transfer RNAs. In Chlorobium phaeovibrioides (strain DSM 265 / 1930) (Prosthecochloris vibrioformis (strain DSM 265)), this protein is tRNA pseudouridine synthase A.